The sequence spans 436 residues: Glutamyl-tRNA reductase (436 aa).

Substrate is bound by residues 49 to 52 (TCNR), Ser109, 114 to 116 (EGQ), and Gln120. Cys50 acts as the Nucleophile in catalysis. 198-203 (GAGRMS) contacts NADP(+).

Belongs to the glutamyl-tRNA reductase family. In terms of assembly, homodimer.

It catalyses the reaction (S)-4-amino-5-oxopentanoate + tRNA(Glu) + NADP(+) = L-glutamyl-tRNA(Glu) + NADPH + H(+). It functions in the pathway porphyrin-containing compound metabolism; protoporphyrin-IX biosynthesis; 5-aminolevulinate from L-glutamyl-tRNA(Glu): step 1/2. The protein operates within porphyrin-containing compound metabolism; chlorophyll biosynthesis. Catalyzes the NADPH-dependent reduction of glutamyl-tRNA(Glu) to glutamate 1-semialdehyde (GSA). This Prochlorococcus marinus (strain MIT 9313) protein is Glutamyl-tRNA reductase.